The primary structure comprises 673 residues: DNA ligase (673 aa).

NAD(+)-binding positions include 36–40, 85–86, and Glu-116; these read DAEYD and SL. Lys-118 serves as the catalytic N6-AMP-lysine intermediate. 4 residues coordinate NAD(+): Arg-139, Glu-176, Lys-291, and Lys-315. The Zn(2+) site is built by Cys-409, Cys-412, Cys-427, and Cys-433. The 82-residue stretch at 592–673 folds into the BRCT domain; sequence RGEQPLAGRT…LQALLQEHGR (82 aa).

It belongs to the NAD-dependent DNA ligase family. LigA subfamily. Mg(2+) is required as a cofactor. The cofactor is Mn(2+).

The enzyme catalyses NAD(+) + (deoxyribonucleotide)n-3'-hydroxyl + 5'-phospho-(deoxyribonucleotide)m = (deoxyribonucleotide)n+m + AMP + beta-nicotinamide D-nucleotide.. In terms of biological role, DNA ligase that catalyzes the formation of phosphodiester linkages between 5'-phosphoryl and 3'-hydroxyl groups in double-stranded DNA using NAD as a coenzyme and as the energy source for the reaction. It is essential for DNA replication and repair of damaged DNA. This is DNA ligase from Alkalilimnicola ehrlichii (strain ATCC BAA-1101 / DSM 17681 / MLHE-1).